A 462-amino-acid polypeptide reads, in one-letter code: Sugar transporter ERD6-like 12 (462 aa).

12 helical membrane-spanning segments follow: residues 25–45, 62–82, 101–121, 124–144, 151–171, 179–199, 262–282, 297–317, 326–346, 358–378, 399–419, and 424–444; these read LLIFSTFIIVSASFTFGAAIG, LAQFSLFGSLSTFGGMIGAIF, LFCITGWLAISLAKDIIWLDM, FLVGIGVGLISYVVPVYIAEI, GAFTFSNQLLQNCGVAVVYYF, TLAIIGSIPCWIQVIGLFFIP, LTIGIGLMLLQQLCGTAGISS, IGMMVLSLIVVPKSLMGLILV, LMTSALGLCLSCITLAVAFGV, IFCFIGILSFTMMFAIGMGAL, VTIANWFTGWIANYAFNFMLV, and GTFIISAIICGATIVFTWCLV.

The protein belongs to the major facilitator superfamily. Sugar transporter (TC 2.A.1.1) family.

The protein resides in the membrane. Sugar transporter. The polypeptide is Sugar transporter ERD6-like 12 (SUGTL5) (Arabidopsis thaliana (Mouse-ear cress)).